We begin with the raw amino-acid sequence, 89 residues long: Small ribosomal subunit protein uS15 (89 aa).

The protein belongs to the universal ribosomal protein uS15 family. As to quaternary structure, part of the 30S ribosomal subunit. Forms a bridge to the 50S subunit in the 70S ribosome, contacting the 23S rRNA.

In terms of biological role, one of the primary rRNA binding proteins, it binds directly to 16S rRNA where it helps nucleate assembly of the platform of the 30S subunit by binding and bridging several RNA helices of the 16S rRNA. Forms an intersubunit bridge (bridge B4) with the 23S rRNA of the 50S subunit in the ribosome. In Leifsonia xyli subsp. xyli (strain CTCB07), this protein is Small ribosomal subunit protein uS15.